The sequence spans 132 residues: Large ribosomal subunit protein uL14 (132 aa).

It belongs to the universal ribosomal protein uL14 family. In terms of assembly, part of the 50S ribosomal subunit. Forms a cluster with proteins L3 and L24e, part of which may contact the 16S rRNA in 2 intersubunit bridges.

In terms of biological role, binds to 23S rRNA. Forms part of two intersubunit bridges in the 70S ribosome. In Methanococcus aeolicus (strain ATCC BAA-1280 / DSM 17508 / OCM 812 / Nankai-3), this protein is Large ribosomal subunit protein uL14.